Consider the following 141-residue polypeptide: Venom protein family 1 protein 1 (141 aa).

A signal peptide spans 1-17 (MKSFIVVLCCLFAITYG). The cysteines at positions 62 and 139 are disulfide-linked.

The protein belongs to the insect vpf1 family. As to expression, expressed by the venom gland (posterior main gland) (at protein level).

It is found in the secreted. The chain is Venom protein family 1 protein 1 from Platymeris rhadamanthus (Red spot assassin bug).